Reading from the N-terminus, the 386-residue chain is MLSGSPGQTPPAPFPSPPPPAPAQPPPPFPQFHVKSGLQIRKNAITDDYKVTSQVLGLGINGKVLRIFDKRTQQKFALKMLQDCPKARREVELHWRASQCPHIVHIVDVYENLYAGRKCLLIVMECLDGGELFSRIQDRGDQAFTEREASEIMKSIGEAIQYLHSINIAHRDVKPENLLYTSKRPNAILKLTDFGFAKETTSHNSLTTPCYTPYYVAPEVLGPEKYDKSCDMWSLGVIMYILLCGYPPFYSNHGLAISPGMKTRIRMGQYEFPNPEWSEVSEEVKMLIRNLLKTEPTQRMTITEFMNHPWIMQSTKVPQTPLHTSRVLKEDKERWEDVKEEMTSALATMRVDYEQIKIKKIEDASNPLLLKRRKKARAVEDAALAH.

Positions 1 to 29 are disordered; the sequence is MLSGSPGQTPPAPFPSPPPPAPAQPPPPF. The span at 8–29 shows a compositional bias: pro residues; the sequence is QTPPAPFPSPPPPAPAQPPPPF. One can recognise a Protein kinase domain in the interval 50-311; that stretch reads KVTSQVLGLG…ITEFMNHPWI (262 aa). Residues 56-64 and Lys-79 each bind ATP; that span reads LGLGINGKV. Position 125-127 (125-127) interacts with staurosporine; sequence ECL. The active-site Proton acceptor is Asp-172. Phosphothreonine; by MAPK14 is present on Thr-208. Ser-258 bears the Phosphoserine; by MAPK14 mark. Position 314 is a phosphoserine; by autocatalysis (Ser-314). Residues 314-350 form an autoinhibitory helix region; it reads STKVPQTPLHTSRVLKEDKERWEDVKEEMTSALATMR. Thr-320 carries the phosphothreonine; by MAPK14 modification. 2 consecutive short sequence motifs (nuclear export signal (NES)) follow at residues 331-354 and 342-351; these read DKER…VDYE and MTSALATMRV. Lys-339 participates in a covalent cross-link: Glycyl lysine isopeptide (Lys-Gly) (interchain with G-Cter in SUMO). The p38 MAPK-binding site stretch occupies residues 352–376; that stretch reads DYEQIKIKKIEDASNPLLLKRRKKA. 2 consecutive short sequence motifs (bipartite nuclear localization signal) follow at residues 357 to 360 and 371 to 375; these read KIKK and KRRKK.

This sequence belongs to the protein kinase superfamily. CAMK Ser/Thr protein kinase family. In terms of assembly, heterodimer with p38-alpha/MAPK14; this heterodimer forms a stable complex: molecules are positioned 'face to face' so that the ATP-binding sites of both kinases are at the heterodimer interface. Interacts with PHC2. Interacts with HSF1. Sumoylation inhibits the protein kinase activity. In terms of processing, phosphorylated and activated by MAP kinase p38-alpha/MAPK14 at Thr-208; Ser-258 and Thr-320. In terms of tissue distribution, ubiquitously expressed (at protein level).

It is found in the cytoplasm. Its subcellular location is the nucleus. The enzyme catalyses L-seryl-[protein] + ATP = O-phospho-L-seryl-[protein] + ADP + H(+). It catalyses the reaction L-threonyl-[protein] + ATP = O-phospho-L-threonyl-[protein] + ADP + H(+). Activated following phosphorylation by p38-alpha/MAPK14 following various stresses. Inhibited following sumoylation. Specifically inhibited by pyrrolopyridine inhibitors. Functionally, stress-activated serine/threonine-protein kinase involved in cytokine production, endocytosis, reorganization of the cytoskeleton, cell migration, cell cycle control, chromatin remodeling, DNA damage response and transcriptional regulation. Following stress, it is phosphorylated and activated by MAP kinase p38-alpha/MAPK14, leading to phosphorylation of substrates. Phosphorylates serine in the peptide sequence, Hyd-X-R-X(2)-S, where Hyd is a large hydrophobic residue. Phosphorylates ALOX5, CDC25B, CDC25C, CEP131, ELAVL1, HNRNPA0, HSP27/HSPB1, KRT18, KRT20, LIMK1, LSP1, PABPC1, PARN, PDE4A, RCSD1, RPS6KA3, TAB3 and TTP/ZFP36. Phosphorylates HSF1; leading to the interaction with HSP90 proteins and inhibiting HSF1 homotrimerization, DNA-binding and transactivation activities. Mediates phosphorylation of HSP27/HSPB1 in response to stress, leading to dissociation of HSP27/HSPB1 from large small heat-shock protein (sHsps) oligomers and impairment of their chaperone activities and ability to protect against oxidative stress effectively. Involved in inflammatory response by regulating tumor necrosis factor (TNF) and IL6 production post-transcriptionally: acts by phosphorylating AU-rich elements (AREs)-binding proteins ELAVL1, HNRNPA0, PABPC1 and TTP/ZFP36, leading to regulation of the stability and translation of TNF and IL6 mRNAs. Phosphorylation of TTP/ZFP36, a major post-transcriptional regulator of TNF, promotes its binding to 14-3-3 proteins and reduces its ARE mRNA affinity leading to inhibition of dependent degradation of ARE-containing transcripts. Phosphorylates CEP131 in response to cellular stress following ultraviolet irradiation which promotes binding of CEP131 to 14-3-3 proteins and inhibits formation of novel centriolar satellites. Also involved in late G2/M checkpoint following DNA damage through a process of post-transcriptional mRNA stabilization: following DNA damage, relocalizes from nucleus to cytoplasm and phosphorylates HNRNPA0 and PARN, leading to stabilization of GADD45A mRNA. Involved in toll-like receptor signaling pathway (TLR) in dendritic cells: required for acute TLR-induced macropinocytosis by phosphorylating and activating RPS6KA3. This is MAP kinase-activated protein kinase 2 (Mapkapk2) from Mus musculus (Mouse).